The following is a 281-amino-acid chain: Sulfur carrier protein FdhD (281 aa).

Cys-127 (cysteine persulfide intermediate) is an active-site residue. 264–269 serves as a coordination point for Mo-bis(molybdopterin guanine dinucleotide); sequence FAREGR.

This sequence belongs to the FdhD family.

It is found in the cytoplasm. Its function is as follows. Required for formate dehydrogenase (FDH) activity. Acts as a sulfur carrier protein that transfers sulfur from IscS to the molybdenum cofactor prior to its insertion into FDH. This Mannheimia succiniciproducens (strain KCTC 0769BP / MBEL55E) protein is Sulfur carrier protein FdhD.